The sequence spans 782 residues: Protein bicaudal D (782 aa).

Residues 15–77 (VQDLQMEVER…RHELDITQEA (63 aa)) are a coiled coil. Serine 103 bears the Phosphoserine mark. Residues 107–249 (ETSLNLQIFD…LETLQGEREA (143 aa)) are a coiled coil. Residues serine 285, serine 288, and serine 305 each carry the phosphoserine modification. Threonine 306 carries the phosphothreonine modification. Position 310 is a phosphoserine (serine 310). 2 coiled-coil regions span residues 320–368 (SEIH…FMSR) and 444–477 (TTTL…TLTH). At serine 528 the chain carries Phosphoserine. Coiled-coil stretches lie at residues 603 to 630 (EKVN…KREQ) and 695 to 743 (CEEY…MEMD). The tract at residues 699 to 722 (VTQVDDLNRQLEAAEEEKKTLNQL) is interaction with Rab6. The disordered stretch occupies residues 744–782 (REMRHVRRPMPAQRGTSGKSSFSTRPSSRNPASSNANPF). Residues 757–767 (RGTSGKSSFST) are compositionally biased toward polar residues. The span at 768 to 782 (RPSSRNPASSNANPF) shows a compositional bias: low complexity.

It belongs to the BicD family. In terms of assembly, may homodimerize but does not interact with BicDR. Interacts (via C-terminal domain) with Rab6. In terms of tissue distribution, in ovaries, expressed in oocyte and nurse cells.

It localises to the cytoplasm. The protein resides in the cytoskeleton. In terms of biological role, this protein is essential for differentiation. It may play a role in localizing of Nanos (a maternal determinant) activity in oocytes. Functions redundantly with BicDR. During oogenesis, plays a specific role, together with Rab6 but independently of Sec5, in the polarization of the oocyte microtubule cytoskeleton, in oskar mRNA localization and in the anterodorsal secretion of grk. Plays a role in the biogenesis of annulate lamellae containing nuclear pore complex components. During macrochaetae development, together with BicDR, involved in Rab 6 and Spn-F stability and distribution and actin cytoskeleton organization. The sequence is that of Protein bicaudal D from Drosophila melanogaster (Fruit fly).